Consider the following 438-residue polypeptide: Xylose isomerase (438 aa).

Residues His-100 and Asp-103 contribute to the active site. The Mg(2+) site is built by Glu-231, Glu-267, His-270, Asp-295, Asp-306, Asp-308, and Asp-338.

The protein belongs to the xylose isomerase family. In terms of assembly, homotetramer. Mg(2+) is required as a cofactor.

Its subcellular location is the cytoplasm. The catalysed reaction is alpha-D-xylose = alpha-D-xylulofuranose. This chain is Xylose isomerase, found in Pseudomonas syringae pv. syringae (strain B728a).